Reading from the N-terminus, the 364-residue chain is Probable dual-specificity RNA methyltransferase RlmN (364 aa).

The active-site Proton acceptor is Glu107. The Radical SAM core domain maps to 113–346 (HDYGNSVCVT…ATIRREQGSD (234 aa)). A disulfide bridge connects residues Cys120 and Cys351. Residues Cys127, Cys131, and Cys134 each contribute to the [4Fe-4S] cluster site. Residues 177–178 (GE), Ser209, 232–234 (SLH), and Asn308 each bind S-adenosyl-L-methionine. Cys351 serves as the catalytic S-methylcysteine intermediate.

Belongs to the radical SAM superfamily. RlmN family. [4Fe-4S] cluster is required as a cofactor.

Its subcellular location is the cytoplasm. The enzyme catalyses adenosine(2503) in 23S rRNA + 2 reduced [2Fe-2S]-[ferredoxin] + 2 S-adenosyl-L-methionine = 2-methyladenosine(2503) in 23S rRNA + 5'-deoxyadenosine + L-methionine + 2 oxidized [2Fe-2S]-[ferredoxin] + S-adenosyl-L-homocysteine. The catalysed reaction is adenosine(37) in tRNA + 2 reduced [2Fe-2S]-[ferredoxin] + 2 S-adenosyl-L-methionine = 2-methyladenosine(37) in tRNA + 5'-deoxyadenosine + L-methionine + 2 oxidized [2Fe-2S]-[ferredoxin] + S-adenosyl-L-homocysteine. Functionally, specifically methylates position 2 of adenine 2503 in 23S rRNA and position 2 of adenine 37 in tRNAs. Confers resistance to some classes of antibiotics. The sequence is that of Probable dual-specificity RNA methyltransferase RlmN from Staphylococcus aureus (strain MW2).